Here is a 500-residue protein sequence, read N- to C-terminus: MVYDLIVIGGGSGGMAAARRAARHNAKVALVEKSRLGGTCVNVGCVPKKIMFNAASVHDILENSRHYGFDTKFSFNLPLLVERRDKYIQRLNNIYRQNLSKDKVDLYEGTASFLSENRILIKGTKDNNNKDNGPLNEEILEGRNILIAVGNKPVFPPVKGIENTISSDEFFNIKESKKIGIVGSGYIAVELINVIKRLGIDSYIFARGNRILRKFDESVINVLENDMKKNNINIVTFADVVEIKKVSDKNLSIHLSDGRIYEHFDHVIYCVGRSPDTENLKLEKLNVETNNNYIVVDENQRTSVNNIYAVGDCCMVKKSKEIEDLNLLKLYNEERYLNKKENVTEDIFYNVQLTPVAINAGRLLADRLFLKKTRKTNYKLIPTVIFSHPPIGTIGLSEEAAIQIYGKENVKIYESKFTNLFFSVYDIEPELKEKTYLKLVCVGKDELIKGLHIIGLNADEIVQGFAVALKMNATKKDFDETIPIHPTAAEEFLTLQPWMK.

Positions 12 and 13 each coordinate FAD. Residue Ser12 participates in glutathione binding. Arg19 contributes to the glutathione binding site. FAD is bound by residues Glu32, Thr39, Cys40, and Lys48. Residues Cys40 and Cys45 are joined by a disulfide bond. Tyr95 contributes to the glutathione binding site. Position 111 (Ala111) interacts with FAD. NADP(+)-binding residues include Ile187, Glu190, Arg207, Arg213, and Gly272. Residues Asp312 and Thr354 each contribute to the FAD site. Arg362 contributes to the glutathione binding site. Val384 is a binding site for NADP(+). His485 serves as a coordination point for FAD. The active-site Proton acceptor is His485.

Belongs to the class-I pyridine nucleotide-disulfide oxidoreductase family. As to quaternary structure, homodimer. It depends on FAD as a cofactor.

The protein resides in the cytoplasm. The catalysed reaction is 2 glutathione + NADP(+) = glutathione disulfide + NADPH + H(+). In terms of biological role, catalyzes the reduction of glutathione disulfide (GSSG) to reduced glutathione (GSH). Constitutes the major mechanism to maintain a high GSH:GSSG ratio in the cytosol. In Plasmodium falciparum (isolate K1 / Thailand), this protein is Glutathione reductase.